A 413-amino-acid chain; its full sequence is 2,3-diketo-5-methylthiopentyl-1-phosphate enolase (413 aa).

K98 serves as the catalytic Proton acceptor. Residues K147, K173–E176, H264, G337, and G359–G360 contribute to the substrate site. K173, D175, and E176 together coordinate Mg(2+). K173 carries the N6-carboxylysine modification.

Belongs to the RuBisCO large chain family. Type IV subfamily. Homodimer. The cofactor is Mg(2+).

It carries out the reaction 5-methylsulfanyl-2,3-dioxopentyl phosphate = 2-hydroxy-5-methylsulfanyl-3-oxopent-1-enyl phosphate. It participates in amino-acid biosynthesis; L-methionine biosynthesis via salvage pathway; L-methionine from S-methyl-5-thio-alpha-D-ribose 1-phosphate: step 3/6. Functionally, catalyzes the enolization of 2,3-diketo-5-methylthiopentyl-1-phosphate (DK-MTP-1-P) into 2-hydroxy-3-keto-5-methylthiopentenyl-1-phosphate (HK-MTPenyl-1-P). The polypeptide is 2,3-diketo-5-methylthiopentyl-1-phosphate enolase (Geobacillus thermodenitrificans (strain NG80-2)).